A 144-amino-acid chain; its full sequence is Cytochrome c3 (144 aa).

The signal sequence occupies residues 1–24; sequence MRYLVISLFAVSLLMAGSALVGNA. Heme c-binding residues include H51, H54, C59, C62, H63, H64, C76, C81, H82, H100, C108, C111, H112, C125, C128, and H129.

This sequence belongs to the cytochrome c family. In terms of assembly, homodimer. Heterotrimer of cytochrome c3 FDH2C and formate dehydrogenase FDH2 alpha and beta subunits that forms the FdhABC(3) complex. Binds 4 heme c groups per subunit.

It localises to the periplasm. Participates in sulfate respiration coupled with phosphorylation by transferring electrons from the enzyme dehydrogenase to ferredoxin. Gamma chain of the formate dehydrogenase (FDH) that catalyzes the reversible two-electron oxidation of formate to carbon dioxide. The gamma subunit of formate dehydrogenase forms a c-type heme. In Nitratidesulfovibrio vulgaris (strain ATCC 29579 / DSM 644 / CCUG 34227 / NCIMB 8303 / VKM B-1760 / Hildenborough) (Desulfovibrio vulgaris), this protein is Cytochrome c3.